We begin with the raw amino-acid sequence, 607 residues long: Chaperone protein DnaK (607 aa).

Residue Thr-174 is modified to Phosphothreonine; by autocatalysis. Positions 577–594 (QSAGSTAGNPGQGQSTEN) are enriched in polar residues. Residues 577–607 (QSAGSTAGNPGQGQSTENPGGKTIDGDYKVN) form a disordered region.

Belongs to the heat shock protein 70 family.

Functionally, acts as a chaperone. The sequence is that of Chaperone protein DnaK from Dictyoglomus turgidum (strain DSM 6724 / Z-1310).